Consider the following 392-residue polypeptide: Na(+)/H(+) antiporter NhaA (392 aa).

11 helical membrane passes run 16–36, 58–78, 93–113, 124–144, 153–173, 176–196, 199–219, 257–277, 295–315, 328–348, and 362–382; these read ILLIIVTVLALILQNSFLSAA, LLLWVNDGLMAIFFFLIGLEV, ITLPGIAAVGGMIVPALIFIL, GWAIPTATDIAFALGILSLLG, IFLMALSIIDDLGAIVIIALF, TDLSTLSITVAAISLAILFIM, MDVAIKSAYIVIGIILWVSVL, DLHYWVAFLILPLFAFVNAGV, VMLGLFVGKQAGVFGFSWLAI, WMMLYGVSVLTGIGFTMSLFV, and ADKLAILLGSFLSAATGYLIL.

Belongs to the NhaA Na(+)/H(+) (TC 2.A.33) antiporter family.

It localises to the cell inner membrane. It catalyses the reaction Na(+)(in) + 2 H(+)(out) = Na(+)(out) + 2 H(+)(in). Its function is as follows. Na(+)/H(+) antiporter that extrudes sodium in exchange for external protons. This is Na(+)/H(+) antiporter NhaA from Sulfurovum sp. (strain NBC37-1).